Reading from the N-terminus, the 361-residue chain is Probable galacturonosyltransferase-like 7 (361 aa).

The chain crosses the membrane as a helical; Signal-anchor for type II membrane protein span at residues 1–21 (MLWIMRFSGLFSAALVIIVLS). Residues 22 to 361 (PSLQSFPPAE…PYDLYGHYSR (340 aa)) are Lumenal-facing. N-linked (GlcNAc...) asparagine glycosylation occurs at Asn217.

The protein belongs to the glycosyltransferase 8 family.

It is found in the golgi apparatus membrane. The protein operates within glycan metabolism; pectin biosynthesis. Its function is as follows. May be involved in pectin and/or xylans biosynthesis in cell walls. The chain is Probable galacturonosyltransferase-like 7 (GATL7) from Arabidopsis thaliana (Mouse-ear cress).